The sequence spans 386 residues: Manganese dependent endoglucanase Eg5A (386 aa).

Positions 1–17 (MLKYASIALALATLGVA) are cleaved as a signal peptide. In terms of domain architecture, CBM1 spans 18–53 (QQQQWGQCGGIGWTGATTCVAGSVCSVLNPYYSQCI). Glu-209 (proton donor) is an active-site residue. Catalysis depends on Glu-319, which acts as the Nucleophile. Asn-324 is a glycosylation site (N-linked (GlcNAc...) asparagine).

The protein belongs to the glycosyl hydrolase 5 (cellulase A) family. It depends on Mn(2+) as a cofactor.

Its subcellular location is the secreted. The enzyme catalyses Endohydrolysis of (1-&gt;4)-beta-D-glucosidic linkages in cellulose, lichenin and cereal beta-D-glucans.. In terms of biological role, secreted manganese dependent endoglucanase that acts by cleaving the beta-1,4-glucose linkage. Exhibits high activity toward carboxymethyl-cellulose (CMC), barley glucan, and glucomannan. Displays low activity on larminarin and xyloglucan but does not hydrolyze hemicellulose substrates such as birchwood xylan, arabinoxylan, and arabinan. This chain is Manganese dependent endoglucanase Eg5A, found in Phanerodontia chrysosporium (White-rot fungus).